The following is a 150-amino-acid chain: Lipoprotein signal peptidase (150 aa).

Helical transmembrane passes span F8–A28, G58–L78, and T81–D101. Active-site residues include D116 and D132. A helical membrane pass occupies residues V126–L146.

The protein belongs to the peptidase A8 family.

It is found in the cell membrane. It carries out the reaction Release of signal peptides from bacterial membrane prolipoproteins. Hydrolyzes -Xaa-Yaa-Zaa-|-(S,diacylglyceryl)Cys-, in which Xaa is hydrophobic (preferably Leu), and Yaa (Ala or Ser) and Zaa (Gly or Ala) have small, neutral side chains.. The protein operates within protein modification; lipoprotein biosynthesis (signal peptide cleavage). Its function is as follows. This protein specifically catalyzes the removal of signal peptides from prolipoproteins. This is Lipoprotein signal peptidase from Tropheryma whipplei (strain TW08/27) (Whipple's bacillus).